The sequence spans 287 residues: Kit ligand (287 aa).

The first 25 residues, 1–25 (MKKAQTWIITCFCLQLLLLNPLVKT), serve as a signal peptide directing secretion. The Extracellular segment spans residues 26–225 (QSSCGNPVTD…LGFISSSSLQ (200 aa)). 2 cysteine pairs are disulfide-bonded: C29–C117 and C68–C167. N100, N106, N149, N178, N200, and N206 each carry an N-linked (GlcNAc...) asparagine glycan. Residues 226–246 (GISIALTSLLSLLIGFILGVI) traverse the membrane as a helical segment. Topologically, residues 247–287 (YWKKTHPKSRPESNETTQCHGCQEENEISMLQQKEKEHLQV) are cytoplasmic.

The protein belongs to the SCF family. Homodimer, non-covalently linked. In terms of processing, a soluble form is produced by proteolytic processing of isoform 1 in the extracellular domain.

The protein localises to the cell membrane. Its subcellular location is the secreted. It is found in the cytoplasm. It localises to the cytoskeleton. The protein resides in the cell projection. The protein localises to the lamellipodium. Its subcellular location is the filopodium. Its function is as follows. Ligand for the receptor-type protein-tyrosine kinase KIT. Plays an essential role in the regulation of cell survival and proliferation, hematopoiesis, stem cell maintenance, gametogenesis, mast cell development, migration and function, and in melanogenesis. KITLG/SCF binding can activate several signaling pathways. Acts synergistically with other cytokines, probably interleukins. This is Kit ligand (KITLG) from Coturnix japonica (Japanese quail).